A 1460-amino-acid chain; its full sequence is ABC transporter C family member 5 (1460 aa).

Disordered regions lie at residues 1–23 and 37–68; these read MKYN…NESE and GNNN…KKKN. The segment covering 37–55 has biased composition (low complexity); that stretch reads GNNNNDINNNNNINNNNDS. 5 helical membrane-spanning segments follow: residues 196 to 216, 238 to 258, 320 to 340, 425 to 445, and 456 to 476; these read FALS…GPIF, LGYY…IFLY, LIFA…CVGW, LIVV…TVYY, and IFAA…LPYG. An ABC transmembrane type-1 1 domain is found at 196-482; sequence FALSWVHFGL…LPYGYNIYIQ (287 aa). Positions 537-567 are disordered; that stretch reads IKPQTNPPPPRTTPSNDKSSPSGNNSNNEKK. Residues 551-563 are compositionally biased toward polar residues; sequence SNDKSSPSGNNSN. One can recognise an ABC transporter 1 domain in the interval 560–783; sequence NNSNNEKKEV…INSAYGNSSL (224 aa). 593 to 600 provides a ligand contact to ATP; the sequence is GPVGSGKS. 4 helical membrane-spanning segments follow: residues 842-862, 922-942, 1014-1034, and 1108-1128; these read MYYV…GYCI, AGEF…LIIV, ILVI…PIII, and WLGL…CIFI. The region spanning 853–1166 is the ABC transmembrane type-1 2 domain; it reads FLIALLGYCI…ATQQLAELET (314 aa). The ABC transporter 2 domain maps to 1210–1444; it reads IIFENVVMSY…ENSLFNWLID (235 aa). 1244–1251 serves as a coordination point for ATP; it reads GRTGSGKS.

Belongs to the ABC transporter superfamily. ABCC family. Conjugate transporter (TC 3.A.1.208) subfamily.

The protein resides in the membrane. The chain is ABC transporter C family member 5 (abcC5) from Dictyostelium discoideum (Social amoeba).